Here is a 407-residue protein sequence, read N- to C-terminus: Imidazolonepropionase (407 aa).

The Fe(3+) site is built by His68 and His70. Residues His68 and His70 each coordinate Zn(2+). Residues Arg77, Tyr140, and His173 each contribute to the 4-imidazolone-5-propanoate site. Residue Tyr140 participates in N-formimidoyl-L-glutamate binding. His238 serves as a coordination point for Fe(3+). His238 is a binding site for Zn(2+). A 4-imidazolone-5-propanoate-binding site is contributed by Gln241. Residue Asp313 participates in Fe(3+) binding. Asp313 lines the Zn(2+) pocket. Residues Asn315 and Gly317 each contribute to the N-formimidoyl-L-glutamate site. Thr318 contacts 4-imidazolone-5-propanoate.

The protein belongs to the metallo-dependent hydrolases superfamily. HutI family. The cofactor is Zn(2+). Fe(3+) serves as cofactor.

The protein localises to the cytoplasm. It carries out the reaction 4-imidazolone-5-propanoate + H2O = N-formimidoyl-L-glutamate. The protein operates within amino-acid degradation; L-histidine degradation into L-glutamate; N-formimidoyl-L-glutamate from L-histidine: step 3/3. Functionally, catalyzes the hydrolytic cleavage of the carbon-nitrogen bond in imidazolone-5-propanoate to yield N-formimidoyl-L-glutamate. It is the third step in the universal histidine degradation pathway. This is Imidazolonepropionase from Burkholderia lata (strain ATCC 17760 / DSM 23089 / LMG 22485 / NCIMB 9086 / R18194 / 383).